Reading from the N-terminus, the 791-residue chain is Linear element protein rec10 (791 aa).

Disordered stretches follow at residues 462–523 (NSVP…AKSN) and 644–672 (LLDG…TLIS). The short motif at 485-492 (QRRKDGKF) is the Nuclear localization signal element. A compositionally biased stretch (basic residues) spans 493 to 503 (AKSTKRKKQKS). Positions 644–657 (LLDGTCSSPPNNEC) are enriched in polar residues.

In terms of assembly, component of linear elements (LinEs), which are similar to synaptonemal complexes, at least composed of rec27, rec25, rec10 and mug20. Interacts with rec25; the interaction is direct. Interacts with hop1 (via N-terminus); the interaction is direct. Interacts with rec15 (via C-terminus); the interaction is direct.

The protein resides in the nucleus. It localises to the chromosome. Functionally, organizes linear element components on chromosomes and is thus required for meiotic DNA recombination. This is Linear element protein rec10 from Schizosaccharomyces pombe (strain 972 / ATCC 24843) (Fission yeast).